Here is a 212-residue protein sequence, read N- to C-terminus: Large ribosomal subunit protein bL25 (212 aa).

The segment at 1-25 (MSQSTIHKIAVKKRTETGKNENNRL) is disordered. Residues 13–24 (KRTETGKNENNR) show a composition bias toward basic and acidic residues.

This sequence belongs to the bacterial ribosomal protein bL25 family. CTC subfamily. As to quaternary structure, part of the 50S ribosomal subunit; part of the 5S rRNA/L5/L18/L25 subcomplex. Contacts the 5S rRNA. Binds to the 5S rRNA independently of L5 and L18.

In terms of biological role, this is one of the proteins that binds to the 5S RNA in the ribosome where it forms part of the central protuberance. This chain is Large ribosomal subunit protein bL25, found in Leptospira borgpetersenii serovar Hardjo-bovis (strain JB197).